Reading from the N-terminus, the 279-residue chain is Oxygen-dependent coproporphyrinogen-III oxidase (279 aa).

S102 is a binding site for substrate. Positions 106 and 116 each coordinate a divalent metal cation. The Proton donor role is filled by H116. 118–120 (NTR) lines the substrate pocket. Residues H149 and H179 each coordinate a divalent metal cation. The tract at residues 244–279 (YVEFNLLYDRGTKFGLMTDGNVEAILMSLPPEVKFN) is important for dimerization.

Belongs to the aerobic coproporphyrinogen-III oxidase family. In terms of assembly, homodimer. The cofactor is a divalent metal cation.

The protein resides in the cytoplasm. The enzyme catalyses coproporphyrinogen III + O2 + 2 H(+) = protoporphyrinogen IX + 2 CO2 + 2 H2O. It participates in porphyrin-containing compound metabolism; protoporphyrin-IX biosynthesis; protoporphyrinogen-IX from coproporphyrinogen-III (O2 route): step 1/1. Its function is as follows. Involved in the heme biosynthesis. Catalyzes the aerobic oxidative decarboxylation of propionate groups of rings A and B of coproporphyrinogen-III to yield the vinyl groups in protoporphyrinogen-IX. In Rickettsia rickettsii (strain Iowa), this protein is Oxygen-dependent coproporphyrinogen-III oxidase.